A 354-amino-acid chain; its full sequence is 3'-5' exonuclease (354 aa).

A disordered region spans residues methionine 1–lysine 120. Residues lysine 13 to alanine 50 are compositionally biased toward basic and acidic residues. The span at threonine 59–arginine 70 shows a compositional bias: basic residues. The segment covering lysine 71–proline 91 has biased composition (basic and acidic residues). Residues serine 104, serine 110, and serine 112 each carry the phosphoserine modification. A 3'-5' exonuclease domain is found at tryptophan 149 to arginine 314. 3 residues coordinate Mg(2+): aspartate 163, glutamate 165, and aspartate 301.

This sequence belongs to the WRNexo family.

It localises to the nucleus. In terms of biological role, has exonuclease activity on both single-stranded and duplex templates bearing overhangs, but not blunt ended duplex DNA, and cleaves in a 3'-5' direction. Essential for the formation of DNA replication focal centers. Has an important role in maintaining genome stability. This chain is 3'-5' exonuclease, found in Drosophila sechellia (Fruit fly).